The chain runs to 287 residues: Cbb3-type cytochrome c oxidase subunit FixPc (287 aa).

The Cytoplasmic portion of the chain corresponds to 1–36; the sequence is MSEKHIDEFSGVETTGHEWDGIRELNNPMPRWWVWT. A helical transmembrane segment spans residues 37–57; sequence FYATIVWALGYAIAYPAIPMI. The Periplasmic portion of the chain corresponds to 58 to 287; the sequence is TDATKGMLGF…IFVHSLGGGT (230 aa). Cytochrome c domains are found at residues 108-196 and 203-284; these read FAIA…WGLT and GLAE…HSLG. Cysteine 121, cysteine 124, histidine 125, methionine 173, cysteine 216, cysteine 219, histidine 220, and methionine 261 together coordinate heme c.

The protein belongs to the CcoP / FixP family. In terms of assembly, component of the cbb3-type cytochrome c oxidase at least composed of FixN, FixO, FixQ and FixP. The cofactor is heme c.

The protein resides in the cell inner membrane. It functions in the pathway energy metabolism; oxidative phosphorylation. C-type cytochrome. Part of the cbb3-type cytochrome c oxidase complex. FixP subunit is required for transferring electrons from donor cytochrome c via its heme groups to FixO subunit. From there, electrons are shuttled to the catalytic binuclear center of FixN subunit where oxygen reduction takes place. The complex also functions as a proton pump. The protein is Cbb3-type cytochrome c oxidase subunit FixPc of Rhizobium leguminosarum bv. viciae.